Consider the following 647-residue polypeptide: 1-deoxy-D-xylulose-5-phosphate synthase (647 aa).

Thiamine diphosphate-binding positions include histidine 79 and 120 to 122 (GHA). Residue aspartate 152 coordinates Mg(2+). Thiamine diphosphate contacts are provided by residues 153–154 (GS), asparagine 181, phenylalanine 293, and glutamate 377. Asparagine 181 serves as a coordination point for Mg(2+).

It belongs to the transketolase family. DXPS subfamily. In terms of assembly, homodimer. Mg(2+) is required as a cofactor. Thiamine diphosphate serves as cofactor.

The enzyme catalyses D-glyceraldehyde 3-phosphate + pyruvate + H(+) = 1-deoxy-D-xylulose 5-phosphate + CO2. The protein operates within metabolic intermediate biosynthesis; 1-deoxy-D-xylulose 5-phosphate biosynthesis; 1-deoxy-D-xylulose 5-phosphate from D-glyceraldehyde 3-phosphate and pyruvate: step 1/1. Catalyzes the acyloin condensation reaction between C atoms 2 and 3 of pyruvate and glyceraldehyde 3-phosphate to yield 1-deoxy-D-xylulose-5-phosphate (DXP). This chain is 1-deoxy-D-xylulose-5-phosphate synthase, found in Bacteroides thetaiotaomicron (strain ATCC 29148 / DSM 2079 / JCM 5827 / CCUG 10774 / NCTC 10582 / VPI-5482 / E50).